Reading from the N-terminus, the 414-residue chain is Serine/threonine transporter SstT (414 aa).

Residues 2 to 15 (TTQRSPGLFRRLAH) are Cytoplasmic-facing. A helical transmembrane segment spans residues 16 to 36 (GSLVKQILVGLVLGILLAWIS). Residues 37-45 (KPAAEAVGL) are Periplasmic-facing. Residues 46-66 (LGTLFVGALKAVAPILVLMLV) form a helical membrane-spanning segment. Residues 67 to 83 (MASIANHQHGQKTNIRP) are Cytoplasmic-facing. Residues 84–104 (ILFLYLLGTFSAALAAVVFSF) traverse the membrane as a helical segment. The Periplasmic segment spans residues 105–142 (AFPSTLHLSSSAGDISPPSGIVEVMRGLVMSMVSNPID). A helical transmembrane segment spans residues 143–163 (ALLKGNYIGILVWAIGLGFAL). Over 164–179 (RHGNETTKNLVNDLSN) the chain is Cytoplasmic. The chain crosses the membrane as a helical span at residues 180-200 (AVTFMVKLVIRFAPIGIFGLV). Residues 201 to 217 (SSTLATTGFSTLWGYAQ) are Periplasmic-facing. A helical membrane pass occupies residues 218 to 238 (LLVVLVGCMLLVALVVNPLLV). The Cytoplasmic segment spans residues 239–299 (WWKIRRNPFP…VSIPLGATIN (61 aa)). A helical membrane pass occupies residues 300-320 (MAGAAITITVLTLAAVNTLGI). At 321-331 (PVDLPTALLLS) the chain is on the periplasmic side. A helical transmembrane segment spans residues 332–352 (VVASLCACGASGVAGGSLLLI). At 353-414 (PLACNMFGIS…DRLANSALRN (62 aa)) the chain is on the cytoplasmic side.

This sequence belongs to the dicarboxylate/amino acid:cation symporter (DAACS) (TC 2.A.23) family.

The protein resides in the cell inner membrane. The catalysed reaction is L-serine(in) + Na(+)(in) = L-serine(out) + Na(+)(out). It carries out the reaction L-threonine(in) + Na(+)(in) = L-threonine(out) + Na(+)(out). Its function is as follows. Involved in the import of serine and threonine into the cell, with the concomitant import of sodium (symport system). This Shigella boydii serotype 4 (strain Sb227) protein is Serine/threonine transporter SstT.